The sequence spans 239 residues: Ribonuclease PH (239 aa).

Phosphate is bound by residues Arg-86 and 124-126; that span reads GTR.

The protein belongs to the RNase PH family. In terms of assembly, homohexameric ring arranged as a trimer of dimers.

It catalyses the reaction tRNA(n+1) + phosphate = tRNA(n) + a ribonucleoside 5'-diphosphate. Phosphorolytic 3'-5' exoribonuclease that plays an important role in tRNA 3'-end maturation. Removes nucleotide residues following the 3'-CCA terminus of tRNAs; can also add nucleotides to the ends of RNA molecules by using nucleoside diphosphates as substrates, but this may not be physiologically important. Probably plays a role in initiation of 16S rRNA degradation (leading to ribosome degradation) during starvation. The polypeptide is Ribonuclease PH (Cupriavidus taiwanensis (strain DSM 17343 / BCRC 17206 / CCUG 44338 / CIP 107171 / LMG 19424 / R1) (Ralstonia taiwanensis (strain LMG 19424))).